The following is a 382-amino-acid chain: Opsin Rh5 (382 aa).

Over 1-49 the chain is Extracellular; sequence MHINGPSGPQAYVNDSLGDGSVFPMGHGYPAEYQHMVHAHWRGFREAPI. N-linked (GlcNAc...) asparagine glycosylation occurs at Asn-14. Residues 50–76 traverse the membrane as a helical segment; sequence YYHAGFYIAFIVLMLSSIFGNGLVIWI. Over 77-88 the chain is Cytoplasmic; sequence FSTSKSLRTPSN. A helical membrane pass occupies residues 89–112; sequence LLILNLAIFDLFMCTNMPHYLINA. Residues 113-127 are Extracellular-facing; the sequence is TVGYIVGGDLGCDIY. Residues Cys-124 and Cys-201 are joined by a disulfide bond. A helical transmembrane segment spans residues 128–147; sequence ALNGGISGMGASITNAFIAF. The Cytoplasmic portion of the chain corresponds to 148–165; sequence DRYKTISNPIDGRLSYGQ. A helical membrane pass occupies residues 166-190; sequence IVLLILFTWLWATPFSVLPLFQIWG. At 191 to 214 the chain is on the extracellular side; that stretch reads RYQPEGFLTTCSFDYLTNTDENRL. Residues 215–242 form a helical membrane-spanning segment; the sequence is FVRTIFVWSYVIPMTMILVSYYKLFTHV. Residues 243-278 are Cytoplasmic-facing; the sequence is RVHEKMLAEQAKKMNVKSLSANANADNMSVELRIAK. Residues 279–302 traverse the membrane as a helical segment; sequence AALIIYMLFILAWTPYSVVALIGC. Residues 303–310 lie on the Extracellular side of the membrane; that stretch reads FGEQQLIT. A helical transmembrane segment spans residues 311–335; sequence PFVSMLPCLACKSVSCLDPWVYATS. Residue Lys-322 is modified to N6-(retinylidene)lysine. Topologically, residues 336-382 are cytoplasmic; it reads HPKYRLELERRLPWLGIREKHATSGTSGGQESVASVSGDTLALSVQN. Residues 357–382 are disordered; the sequence is ATSGTSGGQESVASVSGDTLALSVQN. A compositionally biased stretch (polar residues) spans 358-382; the sequence is TSGTSGGQESVASVSGDTLALSVQN.

It belongs to the G-protein coupled receptor 1 family. Opsin subfamily. Phosphorylated on some or all of the serine and threonine residues present in the C-terminal region. Expressed specifically in the retina. Each Drosophila eye is composed of 800 facets or ommatidia. Each ommatidium contains 8 photoreceptor cells (R1-R8), the R1 to R6 cells are outer cells, while R7 and R8 are inner cells. Rh5 is expressed only in R8 photoreceptor cells in a subset of ommatidia.

Its subcellular location is the cell projection. The protein resides in the rhabdomere membrane. Functionally, visual pigments are the light-absorbing molecules that mediate vision. They consist of an apoprotein, opsin, covalently linked to cis-retinal. The chain is Opsin Rh5 (Rh5) from Drosophila melanogaster (Fruit fly).